The primary structure comprises 122 residues: Protein NIM1-INTERACTING 2 (122 aa).

A compositionally biased stretch (basic and acidic residues) spans 1-22; it reads MNNSLKKEERVEEDNGKSDGNR. Residues 1–28 are disordered; that stretch reads MNNSLKKEERVEEDNGKSDGNRGKPSTE. Residues 39-45 are involved in NPR1/NIM1 interaction; that stretch reads DEFFKIL. The Nuclear localization signal motif lies at 70–74; that stretch reads KKRKR.

In terms of assembly, interacts with NPR1 N-terminal region.

The protein localises to the nucleus. This Arabidopsis thaliana (Mouse-ear cress) protein is Protein NIM1-INTERACTING 2.